A 447-amino-acid chain; its full sequence is tRNA-2-methylthio-N(6)-dimethylallyladenosine synthase (447 aa).

Residues 8 to 126 form the MTTase N-terminal domain; sequence KKVVTLAYGC…FQRLLEEAEE (119 aa). Residues cysteine 17, cysteine 53, cysteine 87, cysteine 162, cysteine 166, and cysteine 169 each contribute to the [4Fe-4S] cluster site. The 231-residue stretch at 148–378 folds into the Radical SAM core domain; it reads AKGKLKAYVN…ITVQNAQSLA (231 aa). The TRAM domain maps to 381–444; the sequence is QEMIGKTCEV…SWTLFGECRA (64 aa).

The protein belongs to the methylthiotransferase family. MiaB subfamily. In terms of assembly, monomer. [4Fe-4S] cluster serves as cofactor.

It localises to the cytoplasm. It catalyses the reaction N(6)-dimethylallyladenosine(37) in tRNA + (sulfur carrier)-SH + AH2 + 2 S-adenosyl-L-methionine = 2-methylsulfanyl-N(6)-dimethylallyladenosine(37) in tRNA + (sulfur carrier)-H + 5'-deoxyadenosine + L-methionine + A + S-adenosyl-L-homocysteine + 2 H(+). Its function is as follows. Catalyzes the methylthiolation of N6-(dimethylallyl)adenosine (i(6)A), leading to the formation of 2-methylthio-N6-(dimethylallyl)adenosine (ms(2)i(6)A) at position 37 in tRNAs that read codons beginning with uridine. The chain is tRNA-2-methylthio-N(6)-dimethylallyladenosine synthase from Desulfitobacterium hafniense (strain Y51).